The sequence spans 231 residues: Transmembrane gamma-carboxyglutamic acid protein 3 (231 aa).

Residues 1 to 19 constitute a propeptide that is removed on maturation; that stretch reads MAVFLEAKNAHAVLKRFPR. Residues 20 to 65 enclose the Gla domain; it reads ANEFLEELRQGTIERECMEEICSYEEVKEVFENKEKTMEFWKGYPN. Topologically, residues 20–78 are extracellular; that stretch reads ANEFLEELRQGTIERECMEEICSYEEVKEVFENKEKTMEFWKGYPNAVYSVRDPSQSSD. 4-carboxyglutamate is present on residues Glu22, Glu25, Glu26, Glu33, Glu35, Glu38, Glu39, Glu44, Glu45, Glu48, Glu51, Glu54, and Glu58. Cys36 and Cys41 are joined by a disulfide. Residues 79 to 101 traverse the membrane as a helical segment; that stretch reads AMYVVVPLLGVVLLIVIALFIIW. At 102–231 the chain is on the cytoplasmic side; the sequence is RCQLQKATRH…IVAASPSADK (130 aa). 2 disordered regions span residues 140-165 and 184-231; these read HSQG…SRGG and RLSS…SADK. The segment covering 201 to 212 has biased composition (polar residues); the sequence is QEGSSEEASVSY.

In terms of processing, gla residues are produced after subsequent post-translational modifications of glutamate by a vitamin K-dependent gamma-carboxylase.

It is found in the membrane. The sequence is that of Transmembrane gamma-carboxyglutamic acid protein 3 (Prrg3) from Mus musculus (Mouse).